A 272-amino-acid polypeptide reads, in one-letter code: MNNSEQLIALKESETAFLKYFNKADYELVDFSLVEKLDWKQLNHEDLQQMGERNFWQHEHQIYALRNDFTDQLLRYYSMYPTAATKVAYTGLIIRNNEAAVQVGLENYAPSLANVQQSLKLFIQFIQQQLRDNVHFVVLGHYQLLDALLDKSLQTPDILSMIEERNLSGLVTYLSTEHPIVQILKENTQQQLNVLEHYIPNDHPALVELKIWERWLHTQGYKDIHLDITAQPPRSYYTGLFIQCHFAENESRVLTGGYYKGSIEGFGLGLTL.

This sequence belongs to the class-II aminoacyl-tRNA synthetase family. HisZ subfamily. Heteromultimer composed of HisG and HisZ subunits.

The protein localises to the cytoplasm. It functions in the pathway amino-acid biosynthesis; L-histidine biosynthesis; L-histidine from 5-phospho-alpha-D-ribose 1-diphosphate: step 1/9. Functionally, required for the first step of histidine biosynthesis. May allow the feedback regulation of ATP phosphoribosyltransferase activity by histidine. The polypeptide is ATP phosphoribosyltransferase regulatory subunit (Staphylococcus aureus (strain MRSA252)).